The primary structure comprises 216 residues: Octanoyltransferase (216 aa).

The BPL/LPL catalytic domain occupies 31–205 (STTRDEVWLV…ELVTLLDYEQ (175 aa)). Residues 70–77 (RGGQVTYH), 137–139 (SLG), and 150–152 (GLA) each bind substrate. The active-site Acyl-thioester intermediate is the cysteine 168.

Belongs to the LipB family.

The protein localises to the cytoplasm. It carries out the reaction octanoyl-[ACP] + L-lysyl-[protein] = N(6)-octanoyl-L-lysyl-[protein] + holo-[ACP] + H(+). It participates in protein modification; protein lipoylation via endogenous pathway; protein N(6)-(lipoyl)lysine from octanoyl-[acyl-carrier-protein]: step 1/2. In terms of biological role, catalyzes the transfer of endogenously produced octanoic acid from octanoyl-acyl-carrier-protein onto the lipoyl domains of lipoate-dependent enzymes. Lipoyl-ACP can also act as a substrate although octanoyl-ACP is likely to be the physiological substrate. In Vibrio cholerae serotype O1 (strain ATCC 39541 / Classical Ogawa 395 / O395), this protein is Octanoyltransferase.